The following is an 880-amino-acid chain: Interference hedgehog (880 aa).

The N-terminal stretch at 1-20 is a signal peptide; the sequence is MTLLTSSLLLFSLLTSRLEA. The Extracellular portion of the chain corresponds to 21-703; that stretch reads IPVLEKSPAH…ETFNMSPMLT (683 aa). 4 consecutive Ig-like C2-type domains span residues 45–142, 132–232, 252–340, and 346–432; these read PGVR…TARL, PLVV…ERIQ, PHLL…YIKV, and PQIV…LQVN. 4 disulfide bridges follow: cysteine 68–cysteine 126, cysteine 173–cysteine 220, cysteine 276–cysteine 324, and cysteine 367–cysteine 414. N-linked (GlcNAc...) asparagine glycans are attached at residues asparagine 102 and asparagine 209. Residues 426-467 are disordered; it reads GTLLQVNPKQIQEPRESGGTHRPKPNQGSKQKQMYPPTPPNV. 2 consecutive Fibronectin type-III domains span residues 461–567 and 575–670; these read PPTP…LQPG and VPEL…TQRP. N-linked (GlcNAc...) asparagine glycosylation occurs at asparagine 466. Positions 497, 501, 503, and 541 each coordinate heparin. Asparagine 557 is a glycosylation site (N-linked (GlcNAc...) asparagine). Residues 662 to 697 are disordered; that stretch reads LKQGRTQRPKTSTTEEPTLQMGDRDTTTPSHNETFN. Polar residues-rich tracts occupy residues 665–678 and 688–697; these read GRTQRPKTSTTEEP and TTPSHNETFN. Asparagine 693 carries N-linked (GlcNAc...) asparagine glycosylation. The helical transmembrane segment at 704 to 724 threads the bilayer; it reads GTIGGGAVLILLLISTCLCVC. Over 725-880 the chain is Cytoplasmic; that stretch reads RRRTSRSRGN…SSGSLNSVGV (156 aa). Disordered stretches follow at residues 728 to 762 and 775 to 880; these read TSRSRGNNPNKPRMAELRDDFVPLGNCSPTKQRQR and QQQQ…SVGV. Low complexity-rich tracts occupy residues 823–837 and 864–880; these read RAGGSNGSNNGNNNN and SSRSENLSSGSLNSVGV.

The protein belongs to the immunoglobulin superfamily. IHOG family. Homodimer. Heterotetramer; 2 iHog chains bind 2 hh chains when facilitated by heparin, heparin is required to promote high-affinity interactions between hh and iHog.

It is found in the membrane. Functionally, mediates response to the active Hedgehog (Hh) protein signal in embryos, functioning upstream or at the level of patched (ptc). This Drosophila sechellia (Fruit fly) protein is Interference hedgehog.